Consider the following 374-residue polypeptide: O-methyltransferase acrG (374 aa).

Residues tyrosine 19, asparagine 70, aspartate 96, serine 128, and phenylalanine 129 each coordinate S-adenosyl-L-homocysteine. Phenylalanine 245 contacts Mg(2+).

This sequence belongs to the methyltransferase superfamily. Type-7 methyltransferase family.

It participates in secondary metabolite biosynthesis. Its function is as follows. O-methyltransferase; part of the cluster that mediates the biosynthesis of acurin A, a highly reduced polyketide coupled to a serine via a peptide bond. The activities of the highly reducing polyketide synthase acrA and the nonribosomal peptide synthetase acrB are collectively responsible for the synthesis of the acurin A core structure with a heptaketide backbone produced by acrA covalently fused to a L-serine by acrB. After the formation of the PK-NRP hybrid product, it is detached from acrB by reductive release to set up the formation of the lactam ring by aldol condensation. The hydrolyase acrC then catalyzes water loss to generate a double bond in the ring. This double bond is probably reduced, which is followed by three oxidations at C-22 to generate the carboxylic acid moiety, involving probably the FAD-binding monooxygenase acrE and the cytochrome P450 monooxygenases acrD and acrF. Finally, a last methylation step performed by the O-methyltransferase acrG leads to the production of acurin A. This is O-methyltransferase acrG from Aspergillus aculeatus (strain ATCC 16872 / CBS 172.66 / WB 5094).